The primary structure comprises 119 residues: Methylglyoxal synthase (119 aa).

The 119-residue stretch at 1–119 (MKIALIAHDK…ESAKLIMADI (119 aa)) folds into the MGS-like domain. Substrate is bound by residues histidine 8, lysine 12, 34–37 (TGTT), and 54–55 (SG). Aspartate 60 acts as the Proton donor/acceptor in catalysis. A substrate-binding site is contributed by histidine 87.

The protein belongs to the methylglyoxal synthase family.

It carries out the reaction dihydroxyacetone phosphate = methylglyoxal + phosphate. Its function is as follows. Catalyzes the formation of methylglyoxal from dihydroxyacetone phosphate. The sequence is that of Methylglyoxal synthase from Clostridium perfringens (strain ATCC 13124 / DSM 756 / JCM 1290 / NCIMB 6125 / NCTC 8237 / Type A).